A 358-amino-acid polypeptide reads, in one-letter code: Alanine racemase (358 aa).

K35 serves as the catalytic Proton acceptor; specific for D-alanine. Position 35 is an N6-(pyridoxal phosphate)lysine (K35). R130 contacts substrate. Y255 functions as the Proton acceptor; specific for L-alanine in the catalytic mechanism. M303 is a binding site for substrate.

It belongs to the alanine racemase family. Pyridoxal 5'-phosphate is required as a cofactor.

The enzyme catalyses L-alanine = D-alanine. It participates in amino-acid biosynthesis; D-alanine biosynthesis; D-alanine from L-alanine: step 1/1. Catalyzes the interconversion of L-alanine and D-alanine. May also act on other amino acids. The sequence is that of Alanine racemase (alr) from Shewanella oneidensis (strain ATCC 700550 / JCM 31522 / CIP 106686 / LMG 19005 / NCIMB 14063 / MR-1).